Consider the following 376-residue polypeptide: Gibberellic acid methyltransferase 1 (376 aa).

The S-adenosyl-L-homocysteine site is built by Y22, C64, N69, D104, L105, S136, and F137. Position 158 (W158) interacts with gibberellin A9. N175, V179, R265, D266, F268, and N269 together coordinate Mg(2+).

The protein belongs to the methyltransferase superfamily. Type-7 methyltransferase family. SABATH subfamily. It depends on Mg(2+) as a cofactor. In terms of tissue distribution, expressed in siliques, developing seeds, anthers and germinating seeds. Not detected in leaves, stems, flowers and roots.

The catalysed reaction is gibberellin A9 + S-adenosyl-L-methionine = O-methyl gibberellin A9 + S-adenosyl-L-homocysteine. Up-regulated by K(+) and NH(4+), down-regulated by Zn(2+), Cu(2+), Fe(2+) and Fe(3+). Methylates the carboxyl group of several gibberellins (GAs). Substrate preference is GA9 &gt; GA20 &gt; GA3 &gt; GA4 &gt; GA34 &gt; GA51 &gt; GA1 &gt; GA19 &gt; GA12. No activity with diterpenes abietic acid and ent-kaurenoic acid. The polypeptide is Gibberellic acid methyltransferase 1 (GAMT1) (Arabidopsis thaliana (Mouse-ear cress)).